We begin with the raw amino-acid sequence, 239 residues long: tRNA (guanine-N(7)-)-methyltransferase (239 aa).

4 residues coordinate S-adenosyl-L-methionine: glutamate 69, glutamate 94, aspartate 121, and aspartate 144. Residue aspartate 144 is part of the active site. Lysine 148 serves as a coordination point for substrate. The interval 150–155 (RHNKRR) is interaction with RNA. Residues aspartate 180 and 217 to 220 (TKFE) contribute to the substrate site.

This sequence belongs to the class I-like SAM-binding methyltransferase superfamily. TrmB family. In terms of assembly, monomer.

It catalyses the reaction guanosine(46) in tRNA + S-adenosyl-L-methionine = N(7)-methylguanosine(46) in tRNA + S-adenosyl-L-homocysteine. Its pathway is tRNA modification; N(7)-methylguanine-tRNA biosynthesis. Its function is as follows. Catalyzes the formation of N(7)-methylguanine at position 46 (m7G46) in tRNA. This chain is tRNA (guanine-N(7)-)-methyltransferase, found in Escherichia coli O6:K15:H31 (strain 536 / UPEC).